The primary structure comprises 954 residues: Glycine dehydrogenase (decarboxylating) (954 aa).

Lys-704 bears the N6-(pyridoxal phosphate)lysine mark.

This sequence belongs to the GcvP family. In terms of assembly, the glycine cleavage system is composed of four proteins: P, T, L and H. The cofactor is pyridoxal 5'-phosphate.

The catalysed reaction is N(6)-[(R)-lipoyl]-L-lysyl-[glycine-cleavage complex H protein] + glycine + H(+) = N(6)-[(R)-S(8)-aminomethyldihydrolipoyl]-L-lysyl-[glycine-cleavage complex H protein] + CO2. Its function is as follows. The glycine cleavage system catalyzes the degradation of glycine. The P protein binds the alpha-amino group of glycine through its pyridoxal phosphate cofactor; CO(2) is released and the remaining methylamine moiety is then transferred to the lipoamide cofactor of the H protein. In Rhizobium johnstonii (strain DSM 114642 / LMG 32736 / 3841) (Rhizobium leguminosarum bv. viciae), this protein is Glycine dehydrogenase (decarboxylating).